The primary structure comprises 587 residues: Aspartate--tRNA ligase (587 aa).

Glu175 contributes to the L-aspartate binding site. Positions 199–202 are aspartate; that stretch reads QQFK. 2 residues coordinate L-aspartate: Arg221 and His446. 221-223 serves as a coordination point for ATP; the sequence is RDE. Glu480 contacts ATP. Arg487 is an L-aspartate binding site. Residue 532-535 participates in ATP binding; sequence GVDR.

It belongs to the class-II aminoacyl-tRNA synthetase family. Type 1 subfamily. As to quaternary structure, homodimer.

It is found in the cytoplasm. The catalysed reaction is tRNA(Asp) + L-aspartate + ATP = L-aspartyl-tRNA(Asp) + AMP + diphosphate. Functionally, catalyzes the attachment of L-aspartate to tRNA(Asp) in a two-step reaction: L-aspartate is first activated by ATP to form Asp-AMP and then transferred to the acceptor end of tRNA(Asp). This chain is Aspartate--tRNA ligase, found in Streptomyces coelicolor (strain ATCC BAA-471 / A3(2) / M145).